Reading from the N-terminus, the 282-residue chain is Shikimate dehydrogenase (NADP(+)) (282 aa).

Shikimate is bound by residues 16 to 18 (SLS) and T63. K67 serves as the catalytic Proton acceptor. Residues N88 and D103 each coordinate shikimate. Residues 128–132 (GAGGA) and G243 each bind NADP(+).

Belongs to the shikimate dehydrogenase family. In terms of assembly, homodimer.

The enzyme catalyses shikimate + NADP(+) = 3-dehydroshikimate + NADPH + H(+). The protein operates within metabolic intermediate biosynthesis; chorismate biosynthesis; chorismate from D-erythrose 4-phosphate and phosphoenolpyruvate: step 4/7. In terms of biological role, involved in the biosynthesis of the chorismate, which leads to the biosynthesis of aromatic amino acids. Catalyzes the reversible NADPH linked reduction of 3-dehydroshikimate (DHSA) to yield shikimate (SA). The polypeptide is Shikimate dehydrogenase (NADP(+)) (Xylella fastidiosa (strain Temecula1 / ATCC 700964)).